The primary structure comprises 490 residues: Probable cytosol aminopeptidase (490 aa).

Mn(2+) contacts are provided by K260 and D265. Residue K272 is part of the active site. Residues D284, D343, and E345 each coordinate Mn(2+). The active site involves R347.

This sequence belongs to the peptidase M17 family. It depends on Mn(2+) as a cofactor.

Its subcellular location is the cytoplasm. The catalysed reaction is Release of an N-terminal amino acid, Xaa-|-Yaa-, in which Xaa is preferably Leu, but may be other amino acids including Pro although not Arg or Lys, and Yaa may be Pro. Amino acid amides and methyl esters are also readily hydrolyzed, but rates on arylamides are exceedingly low.. It catalyses the reaction Release of an N-terminal amino acid, preferentially leucine, but not glutamic or aspartic acids.. Presumably involved in the processing and regular turnover of intracellular proteins. Catalyzes the removal of unsubstituted N-terminal amino acids from various peptides. In Gloeothece citriformis (strain PCC 7424) (Cyanothece sp. (strain PCC 7424)), this protein is Probable cytosol aminopeptidase.